The following is a 418-amino-acid chain: Tyrosine--tRNA ligase 1 (418 aa).

Tyrosine 34 is an L-tyrosine binding site. The short motif at 39–48 (PTADSLHIGH) is the 'HIGH' region element. L-tyrosine-binding residues include tyrosine 169 and glutamine 173. The 'KMSKS' region signature appears at 230–234 (KFGKT). Position 233 (lysine 233) interacts with ATP. The region spanning 352–418 (TVLIDLLVES…GKKKYFLIRY (67 aa)) is the S4 RNA-binding domain.

The protein belongs to the class-I aminoacyl-tRNA synthetase family. TyrS type 1 subfamily. As to quaternary structure, homodimer.

The protein localises to the cytoplasm. It carries out the reaction tRNA(Tyr) + L-tyrosine + ATP = L-tyrosyl-tRNA(Tyr) + AMP + diphosphate + H(+). Functionally, catalyzes the attachment of tyrosine to tRNA(Tyr) in a two-step reaction: tyrosine is first activated by ATP to form Tyr-AMP and then transferred to the acceptor end of tRNA(Tyr). In Bacillus cereus (strain ATCC 14579 / DSM 31 / CCUG 7414 / JCM 2152 / NBRC 15305 / NCIMB 9373 / NCTC 2599 / NRRL B-3711), this protein is Tyrosine--tRNA ligase 1.